Here is a 240-residue protein sequence, read N- to C-terminus: Protein GrpE (240 aa).

Residues 1–13 are compositionally biased toward polar residues; sequence MTDNQRQSTTDGQ. Positions 1 to 89 are disordered; it reads MTDNQRQSTT…DAEQKAEEHW (89 aa). The span at 20–38 shows a compositional bias: low complexity; the sequence is AQATAEAAEQTQATQASAA. Positions 65–89 are enriched in basic and acidic residues; that stretch reads EALRQRVEELEKALADAEQKAEEHW.

It belongs to the GrpE family. As to quaternary structure, homodimer.

The protein resides in the cytoplasm. Functionally, participates actively in the response to hyperosmotic and heat shock by preventing the aggregation of stress-denatured proteins, in association with DnaK and GrpE. It is the nucleotide exchange factor for DnaK and may function as a thermosensor. Unfolded proteins bind initially to DnaJ; upon interaction with the DnaJ-bound protein, DnaK hydrolyzes its bound ATP, resulting in the formation of a stable complex. GrpE releases ADP from DnaK; ATP binding to DnaK triggers the release of the substrate protein, thus completing the reaction cycle. Several rounds of ATP-dependent interactions between DnaJ, DnaK and GrpE are required for fully efficient folding. The chain is Protein GrpE from Halorhodospira halophila (strain DSM 244 / SL1) (Ectothiorhodospira halophila (strain DSM 244 / SL1)).